Here is a 208-residue protein sequence, read N- to C-terminus: Protein GrpE (208 aa).

The segment covering M1–A25 has biased composition (basic and acidic residues). Residues M1–S38 are disordered. A compositionally biased stretch (acidic residues) spans N29–S38.

It belongs to the GrpE family. Homodimer.

Its subcellular location is the cytoplasm. Functionally, participates actively in the response to hyperosmotic and heat shock by preventing the aggregation of stress-denatured proteins, in association with DnaK and GrpE. It is the nucleotide exchange factor for DnaK and may function as a thermosensor. Unfolded proteins bind initially to DnaJ; upon interaction with the DnaJ-bound protein, DnaK hydrolyzes its bound ATP, resulting in the formation of a stable complex. GrpE releases ADP from DnaK; ATP binding to DnaK triggers the release of the substrate protein, thus completing the reaction cycle. Several rounds of ATP-dependent interactions between DnaJ, DnaK and GrpE are required for fully efficient folding. The sequence is that of Protein GrpE from Clostridium perfringens (strain 13 / Type A).